A 426-amino-acid polypeptide reads, in one-letter code: Enolase (426 aa).

Position 163 (Gln163) interacts with (2R)-2-phosphoglycerate. Residue Glu205 is the Proton donor of the active site. Mg(2+) contacts are provided by Asp242, Glu285, and Asp312. 4 residues coordinate (2R)-2-phosphoglycerate: Lys337, Arg366, Ser367, and Lys388. Catalysis depends on Lys337, which acts as the Proton acceptor.

This sequence belongs to the enolase family. Requires Mg(2+) as cofactor.

The protein resides in the cytoplasm. It is found in the secreted. It localises to the cell surface. The enzyme catalyses (2R)-2-phosphoglycerate = phosphoenolpyruvate + H2O. The protein operates within carbohydrate degradation; glycolysis; pyruvate from D-glyceraldehyde 3-phosphate: step 4/5. Functionally, catalyzes the reversible conversion of 2-phosphoglycerate (2-PG) into phosphoenolpyruvate (PEP). It is essential for the degradation of carbohydrates via glycolysis. The sequence is that of Enolase from Nitrobacter winogradskyi (strain ATCC 25391 / DSM 10237 / CIP 104748 / NCIMB 11846 / Nb-255).